The following is a 399-amino-acid chain: 1-deoxy-D-xylulose 5-phosphate reductoisomerase (399 aa).

NADPH contacts are provided by T11, G12, S13, I14, G37, N39, and N125. Residue K126 participates in 1-deoxy-D-xylulose 5-phosphate binding. E127 lines the NADPH pocket. D151 serves as a coordination point for Mn(2+). S152, E153, S177, and H200 together coordinate 1-deoxy-D-xylulose 5-phosphate. E153 lines the Mn(2+) pocket. G206 provides a ligand contact to NADPH. 1-deoxy-D-xylulose 5-phosphate-binding residues include S213, N218, K219, and E222. E222 lines the Mn(2+) pocket.

The protein belongs to the DXR family. The cofactor is Mg(2+). Requires Mn(2+) as cofactor.

The enzyme catalyses 2-C-methyl-D-erythritol 4-phosphate + NADP(+) = 1-deoxy-D-xylulose 5-phosphate + NADPH + H(+). It participates in isoprenoid biosynthesis; isopentenyl diphosphate biosynthesis via DXP pathway; isopentenyl diphosphate from 1-deoxy-D-xylulose 5-phosphate: step 1/6. In terms of biological role, catalyzes the NADPH-dependent rearrangement and reduction of 1-deoxy-D-xylulose-5-phosphate (DXP) to 2-C-methyl-D-erythritol 4-phosphate (MEP). This Nostoc sp. (strain PCC 7120 / SAG 25.82 / UTEX 2576) protein is 1-deoxy-D-xylulose 5-phosphate reductoisomerase.